The primary structure comprises 160 residues: 6,7-dimethyl-8-ribityllumazine synthase (160 aa).

Residues phenylalanine 23, 61 to 63 (SFE), and 85 to 87 (AVI) contribute to the 5-amino-6-(D-ribitylamino)uracil site. 90–91 (DT) provides a ligand contact to (2S)-2-hydroxy-3-oxobutyl phosphate. Histidine 93 serves as the catalytic Proton donor. Phenylalanine 118 is a binding site for 5-amino-6-(D-ribitylamino)uracil. Arginine 132 is a binding site for (2S)-2-hydroxy-3-oxobutyl phosphate.

The protein belongs to the DMRL synthase family.

The enzyme catalyses (2S)-2-hydroxy-3-oxobutyl phosphate + 5-amino-6-(D-ribitylamino)uracil = 6,7-dimethyl-8-(1-D-ribityl)lumazine + phosphate + 2 H2O + H(+). The protein operates within cofactor biosynthesis; riboflavin biosynthesis; riboflavin from 2-hydroxy-3-oxobutyl phosphate and 5-amino-6-(D-ribitylamino)uracil: step 1/2. Its function is as follows. Catalyzes the formation of 6,7-dimethyl-8-ribityllumazine by condensation of 5-amino-6-(D-ribitylamino)uracil with 3,4-dihydroxy-2-butanone 4-phosphate. This is the penultimate step in the biosynthesis of riboflavin. The sequence is that of 6,7-dimethyl-8-ribityllumazine synthase from Parasynechococcus marenigrum (strain WH8102).